We begin with the raw amino-acid sequence, 128 residues long: Aspartate 1-decarboxylase (128 aa).

Catalysis depends on Ser25, which acts as the Schiff-base intermediate with substrate; via pyruvic acid. A Pyruvic acid (Ser) modification is found at Ser25. Thr57 contacts substrate. The Proton donor role is filled by Tyr58. A substrate-binding site is contributed by 73 to 75 (GAA).

It belongs to the PanD family. In terms of assembly, heterooctamer of four alpha and four beta subunits. The cofactor is pyruvate. Is synthesized initially as an inactive proenzyme, which is activated by self-cleavage at a specific serine bond to produce a beta-subunit with a hydroxyl group at its C-terminus and an alpha-subunit with a pyruvoyl group at its N-terminus.

It localises to the cytoplasm. The enzyme catalyses L-aspartate + H(+) = beta-alanine + CO2. It participates in cofactor biosynthesis; (R)-pantothenate biosynthesis; beta-alanine from L-aspartate: step 1/1. Its function is as follows. Catalyzes the pyruvoyl-dependent decarboxylation of aspartate to produce beta-alanine. The chain is Aspartate 1-decarboxylase from Chlorobium phaeovibrioides (strain DSM 265 / 1930) (Prosthecochloris vibrioformis (strain DSM 265)).